The chain runs to 238 residues: Small ribosomal subunit protein eS4 (238 aa).

One can recognise an S4 RNA-binding domain in the interval 38–109 (IPLALVIRDV…DERSYYALVP (72 aa)).

The protein belongs to the eukaryotic ribosomal protein eS4 family.

The polypeptide is Small ribosomal subunit protein eS4 (Pyrobaculum neutrophilum (strain DSM 2338 / JCM 9278 / NBRC 100436 / V24Sta) (Thermoproteus neutrophilus)).